The chain runs to 467 residues: Putative vacuolar protein sorting-associated protein TDA6 (467 aa).

The helical transmembrane segment at 8–28 threads the bilayer; the sequence is ILLWFLIVDLSVIRALVLPPL. 3 N-linked (GlcNAc...) asparagine glycosylation sites follow: Asn61, Asn124, and Asn141.

Belongs to the VPS62 family.

Its subcellular location is the membrane. Its function is as follows. Involved in vacuolar protein sorting. The polypeptide is Putative vacuolar protein sorting-associated protein TDA6 (TDA6) (Saccharomyces cerevisiae (strain ATCC 204508 / S288c) (Baker's yeast)).